Here is a 308-residue protein sequence, read N- to C-terminus: Very-long-chain enoyl-CoA reductase (308 aa).

Residues 1 to 86 (MKHYEVEILD…YFRDLGAQIS (86 aa)) lie on the Cytoplasmic side of the membrane. K22 bears the N6-acetyllysine mark. Position 58 is a phosphoserine (S58). An N6-acetyllysine modification is found at K60. A helical transmembrane segment spans residues 87 to 106 (WVTVFLTEYAGPLFIYLLFY). The Lumenal portion of the chain corresponds to 107-124 (FRVPFIYGHKYDFTSSRH). The helical transmembrane segment at 125-147 (TVVHLACICHSFHYIKRLLETLF) threads the bilayer. Residues 148-158 (VHRFSHGTMPL) are Cytoplasmic-facing. The helical transmembrane segment at 159 to 180 (RNIFKNCTYYWGFAAWMAYYIN) threads the bilayer. Residues 181–189 (HPLYTPPTY) lie on the Lumenal side of the membrane. Residues 190-216 (GAQQVKLALAIFVICQLGNFSIHMALR) traverse the membrane as a helical segment. The Cytoplasmic portion of the chain corresponds to 217-245 (DLRPAGSKTRKIPYPTKNPFTWLFLLVSC). A helical membrane pass occupies residues 246 to 262 (PNYTYEVGSWIGFAIMT). Topologically, residues 263–264 (QC) are lumenal. The chain crosses the membrane as a helical span at residues 265 to 292 (LPVALFSLVGFTQMTIWAKGKHRSYLKE). At 293–308 (FRDYPPLRMPIIPFLL) the chain is on the cytoplasmic side.

Belongs to the steroid 5-alpha reductase family. As to quaternary structure, interacts with ELOVL1 and LASS2. Interacts with HACD1 and HACD2 (via the third lumenal loop), but not with HACD3 and HACD4. Interacts with ELOVL1, ELOVL2, ELOVL3, ELOVL5 and ELOVL7 in the presence of acyl-CoA; interaction with HACD1/2 and that with ELOVLs are mutually exclusive. In terms of processing, glycosylated. As to expression, expressed in most tissues tested. Highly expressed in skeletal muscle.

Its subcellular location is the endoplasmic reticulum membrane. The catalysed reaction is a very-long-chain 2,3-saturated fatty acyl-CoA + NADP(+) = a very-long-chain (2E)-enoyl-CoA + NADPH + H(+). It catalyses the reaction octadecanoyl-CoA + NADP(+) = (2E)-octadecenoyl-CoA + NADPH + H(+). It carries out the reaction (2E,7Z,10Z,13Z,16Z)-docosapentaenoyl-CoA + NADPH + H(+) = (7Z,10Z,13Z,16Z)-docosatetraenoyl-CoA + NADP(+). The enzyme catalyses (2E,7Z,10Z,13Z,16Z,19Z)-docosahexaenoyl-CoA + NADPH + H(+) = (7Z,10Z,13Z,16Z,19Z)-docosapentaenoyl-CoA + NADP(+). The catalysed reaction is (2E,8Z,11Z,14Z)-eicosatetraenoyl-CoA + NADPH + H(+) = (8Z,11Z,14Z)-eicosatrienoyl-CoA + NADP(+). It catalyses the reaction (2E)-hexadecenoyl-CoA + NADPH + H(+) = hexadecanoyl-CoA + NADP(+). It functions in the pathway lipid metabolism; fatty acid biosynthesis. It participates in lipid metabolism; sphingolipid metabolism. Functionally, involved in both the production of very long-chain fatty acids for sphingolipid synthesis and the degradation of the sphingosine moiety in sphingolipids through the sphingosine 1-phosphate metabolic pathway. Catalyzes the last of the four reactions of the long-chain fatty acids elongation cycle. This endoplasmic reticulum-bound enzymatic process, allows the addition of 2 carbons to the chain of long- and very long-chain fatty acids/VLCFAs per cycle. This enzyme reduces the trans-2,3-enoyl-CoA fatty acid intermediate to an acyl-CoA that can be further elongated by entering a new cycle of elongation. Thereby, it participates in the production of VLCFAs of different chain lengths that are involved in multiple biological processes as precursors of membrane lipids and lipid mediators. Catalyzes the saturation step of the sphingosine 1-phosphate metabolic pathway, the conversion of trans-2-hexadecenoyl-CoA to palmitoyl-CoA. The sequence is that of Very-long-chain enoyl-CoA reductase (TECR) from Homo sapiens (Human).